A 1429-amino-acid polypeptide reads, in one-letter code: Inactive rhomboid protein 1 (1429 aa).

3 disordered regions span residues 1–36 (MSSN…STRR), 560–579 (GNED…PDRP), and 740–766 (TSAL…QPGA). At 1 to 843 (MSSNGSDLGH…RPFFTYWINT (843 aa)) the chain is on the cytoplasmic side. Residues 22–33 (SVHSSMRGSMSS) show a composition bias toward low complexity. Polar residues-rich tracts occupy residues 564–573 (AGQSNGTNGN) and 740–763 (TSAL…SSHQ). The chain crosses the membrane as a helical span at residues 844 to 864 (VQVVVLILSIICYGIAPIGIG). Residues 865-1099 (SEQKTGQVLV…PDQLYRLLTS (235 aa)) are Lumenal-facing. A helical transmembrane segment spans residues 1100–1120 (LCMHAGILHLAITLIFQHLFL). Residues 1121–1131 (ADLERLIGTVR) are Cytoplasmic-facing. Residues 1132 to 1152 (TAIVYIMSGFAGNLTSAILVP) form a helical membrane-spanning segment. Residues 1153 to 1156 (HRPE) lie on the Lumenal side of the membrane. Residues 1157-1177 (VGPSASLSGVVASLIALLVWM) traverse the membrane as a helical segment. At 1178-1186 (HWKYLHKPH) the chain is on the cytoplasmic side. A helical transmembrane segment spans residues 1187-1207 (IALFKLLLLCSVLVGIGTLPY). Over 1208–1210 (QLN) the chain is Lumenal. The helical transmembrane segment at 1211–1231 (FLGLLAGVICGCLLTMSLVPF) threads the bilayer. The Cytoplasmic segment spans residues 1232–1245 (TTFSKYGRKKKINL). The helical transmembrane segment at 1246–1266 (IWTCVLFHVVVYTAMIVTFYI) threads the bilayer. At 1267-1429 (HPSEFHSISF…INNNTEFNVL (163 aa)) the chain is on the lumenal side.

It belongs to the peptidase S54 family. As to expression, specifically expressed in the nervous system and in brain.

Its subcellular location is the endoplasmic reticulum membrane. Functionally, rhomboid protease-like protein which has no protease activity but regulates the secretion of several ligands of the epidermal growth factor receptor. Indirectly activates the epidermal growth factor receptor signaling pathway and may thereby regulate sleep, cell survival, proliferation and migration. The polypeptide is Inactive rhomboid protein 1 (rho-5) (Drosophila melanogaster (Fruit fly)).